The sequence spans 505 residues: Acetylcholine receptor subunit beta (505 aa).

The N-terminal stretch at Met1 to Gly24 is a signal peptide. Topologically, residues Ser25–Lys245 are extracellular. Cys152 and Cys166 are joined by a disulfide. N-linked (GlcNAc...) asparagine glycosylation occurs at Asn165. 3 consecutive transmembrane segments (helical) span residues Pro246–Leu270, Met278–Leu295, and Tyr312–Leu333. Residues His334–Arg473 are Cytoplasmic-facing. The tract at residues Lys365–Thr391 is disordered. Tyr394 carries the phosphotyrosine; by Tyr-kinases modification. The chain crosses the membrane as a helical span at residues Leu474–Leu492.

The protein belongs to the ligand-gated ion channel (TC 1.A.9) family. Acetylcholine receptor (TC 1.A.9.1) subfamily. Beta-1/CHRNB1 sub-subfamily. In terms of assembly, pentamer of two alpha chains, and one each of the beta, delta, and gamma (in immature muscle) or epsilon (in mature muscle) chains. The muscle heteropentamer composed of alpha-1, beta-1, delta, epsilon subunits interacts with the alpha-conotoxin ImII.

It localises to the postsynaptic cell membrane. It is found in the cell membrane. It catalyses the reaction K(+)(in) = K(+)(out). The catalysed reaction is Na(+)(in) = Na(+)(out). After binding acetylcholine, the AChR responds by an extensive change in conformation that affects all subunits and leads to opening of an ion-conducting channel across the plasma membrane. This chain is Acetylcholine receptor subunit beta (CHRNB1), found in Bos taurus (Bovine).